Consider the following 573-residue polypeptide: Sulfite reductase [NADPH] hemoprotein beta-component (573 aa).

4 residues coordinate [4Fe-4S] cluster: C438, C444, C483, and C487. Residue C487 participates in siroheme binding.

Belongs to the nitrite and sulfite reductase 4Fe-4S domain family. As to quaternary structure, alpha(8)-beta(8). The alpha component is a flavoprotein, the beta component is a hemoprotein. Siroheme is required as a cofactor. Requires [4Fe-4S] cluster as cofactor.

The catalysed reaction is hydrogen sulfide + 3 NADP(+) + 3 H2O = sulfite + 3 NADPH + 4 H(+). The protein operates within sulfur metabolism; hydrogen sulfide biosynthesis; hydrogen sulfide from sulfite (NADPH route): step 1/1. Component of the sulfite reductase complex that catalyzes the 6-electron reduction of sulfite to sulfide. This is one of several activities required for the biosynthesis of L-cysteine from sulfate. The chain is Sulfite reductase [NADPH] hemoprotein beta-component from Shouchella clausii (strain KSM-K16) (Alkalihalobacillus clausii).